A 359-amino-acid polypeptide reads, in one-letter code: Beta-1,3-galactosyltransferase bre-2 (359 aa).

Residues 1–11 lie on the Cytoplasmic side of the membrane; that stretch reads MRQSRRASSRV. A helical; Signal-anchor for type II membrane protein transmembrane segment spans residues 12-29; it reads NRLVVIFIIVASGFLLLY. Topologically, residues 30 to 359 are lumenal; sequence KNTQQFTQID…NPDLEELKEK (330 aa). N-linked (GlcNAc...) asparagine glycans are attached at residues Asn73, Asn163, and Asn209.

It belongs to the glycosyltransferase 31 family.

Its subcellular location is the golgi apparatus membrane. It functions in the pathway protein modification; protein glycosylation. Functionally, transfers N-acetylgalactosamine onto carbohydrate substrates. Involved in susceptibility to pore-forming crystal toxins in conjunction with bre-1, bre-3, bre-4, and bre-5. Involved in resistance to the nematotoxic C.cinerea galectin Cgl2. This chain is Beta-1,3-galactosyltransferase bre-2, found in Caenorhabditis elegans.